We begin with the raw amino-acid sequence, 436 residues long: AP-2 complex subunit mu-B (436 aa).

Residues 170–435 (RNELFLDVLE…IGRSGIYETR (266 aa)) enclose the MHD domain. Residues lysine 342, lysine 346, and lysine 355 each coordinate a 1,2-diacyl-sn-glycero-3-phospho-(1D-myo-inositol-3,4,5-trisphosphate).

It belongs to the adaptor complexes medium subunit family. As to quaternary structure, adaptor protein complex 2 (AP-2) is a heterotetramer composed of two large adaptins (alpha-type subunit and beta-type subunit), a medium adaptin (mu-type subunit) and a small adaptin (sigma-type subunit).

The protein resides in the cell membrane. It is found in the membrane. Its subcellular location is the coated pit. Component of the adaptor complexes which link clathrin to receptors in coated vesicles. Clathrin-associated protein complexes are believed to interact with the cytoplasmic tails of membrane proteins, leading to their selection and concentration. AP50 is a subunit of the plasma membrane adaptor. The complex binds polyphosphoinositide-containing lipids. The protein is AP-2 complex subunit mu-B (ap2m1b) of Danio rerio (Zebrafish).